Consider the following 484-residue polypeptide: Nuclear rim protein 1 (484 aa).

A Phosphoserine modification is found at S3. 2 consecutive transmembrane segments (helical) span residues 145–165 (FTIF…MFGY) and 252–272 (TAIV…AIVF). The interval 416–458 (SSNENLEKGGAFLPNQDQNRPSKSLSPLRKTPLSARQKRFEGS) is disordered. S417 is modified (phosphoserine). A compositionally biased stretch (polar residues) spans 430-440 (NQDQNRPSKSL). S474 is modified (phosphoserine).

This sequence belongs to the NUR1 family. As to quaternary structure, interacts with CSM1.

The protein localises to the nucleus membrane. In terms of biological role, member of a perinuclear network that controls recombination at multiple loci to maintain genome stability. Required for rDNA repeat stability. This Saccharomyces cerevisiae (strain YJM789) (Baker's yeast) protein is Nuclear rim protein 1 (NUR1).